Reading from the N-terminus, the 360-residue chain is DNA replication and repair protein RecF (360 aa).

30–37 serves as a coordination point for ATP; sequence GQNGSGKT.

Belongs to the RecF family.

It localises to the cytoplasm. Its function is as follows. The RecF protein is involved in DNA metabolism; it is required for DNA replication and normal SOS inducibility. RecF binds preferentially to single-stranded, linear DNA. It also seems to bind ATP. The protein is DNA replication and repair protein RecF of Shewanella frigidimarina (strain NCIMB 400).